Consider the following 200-residue polypeptide: Putative TLC domain-containing protein L438 (200 aa).

A TLC domain is found at 1-193 (MDYKQSNLFL…ILKILRAKLF (193 aa)). The next 6 helical transmembrane spans lie at 9–29 (FLFPIGLGSTYIFYKKICGTF), 43–63 (THGILMLTLVYFLSDYYLMIV), 74–94 (VHHFIGIVSIYFSYMKYYYLI), 96–116 (YLFAYLTFELSTPFLNIAIKY), 131–151 (LAFFILFTVVRIIFGTYLWFV), and 165–185 (YLIVLPTILQFLNYWWYYRIL).

It localises to the membrane. In Acanthamoeba polyphaga mimivirus (APMV), this protein is Putative TLC domain-containing protein L438.